Here is a 370-residue protein sequence, read N- to C-terminus: Erythronate-4-phosphate dehydrogenase (370 aa).

S45 and T66 together coordinate substrate. Positions 142 and 169 each coordinate NAD(+). R202 is a catalytic residue. D228 is an NAD(+) binding site. E233 is a catalytic residue. Catalysis depends on H250, which acts as the Proton donor. Residue G253 participates in NAD(+) binding. A substrate-binding site is contributed by Y254.

This sequence belongs to the D-isomer specific 2-hydroxyacid dehydrogenase family. PdxB subfamily. Homodimer.

The protein localises to the cytoplasm. The catalysed reaction is 4-phospho-D-erythronate + NAD(+) = (R)-3-hydroxy-2-oxo-4-phosphooxybutanoate + NADH + H(+). Its pathway is cofactor biosynthesis; pyridoxine 5'-phosphate biosynthesis; pyridoxine 5'-phosphate from D-erythrose 4-phosphate: step 2/5. In terms of biological role, catalyzes the oxidation of erythronate-4-phosphate to 3-hydroxy-2-oxo-4-phosphonooxybutanoate. This Teredinibacter turnerae (strain ATCC 39867 / T7901) protein is Erythronate-4-phosphate dehydrogenase.